A 480-amino-acid polypeptide reads, in one-letter code: Proline--tRNA ligase (480 aa).

Belongs to the class-II aminoacyl-tRNA synthetase family. ProS type 3 subfamily. In terms of assembly, homodimer.

The protein localises to the cytoplasm. It carries out the reaction tRNA(Pro) + L-proline + ATP = L-prolyl-tRNA(Pro) + AMP + diphosphate. Its function is as follows. Catalyzes the attachment of proline to tRNA(Pro) in a two-step reaction: proline is first activated by ATP to form Pro-AMP and then transferred to the acceptor end of tRNA(Pro). In Pyrococcus abyssi (strain GE5 / Orsay), this protein is Proline--tRNA ligase.